A 116-amino-acid polypeptide reads, in one-letter code: Endoribonuclease EndoA (116 aa).

The protein belongs to the PemK/MazF family. As to quaternary structure, homodimer. Forms a complex with antitoxin EndoAI in which the toxin activity is inhibited. One dimer binds a ssRNA substrate, forms a heterohexamer composed of alternating toxin and antitoxin homodimers which inhibits the endoribonuclease activity. Antitoxin prevents RNA binding to the endoribonuclease.

In terms of biological role, toxic component of a type II toxin-antitoxin (TA) system. Specific for 5'-UACAU-3' sequences, cleaving after the first U. Yields cleavage products with 3' phosphate and 5' hydroxyl groups. Cannot digest substrate with a UUdUACAUAA cleavage site. Overexpression is toxic for cell growth (shown in E.coli), probably by inhibiting protein synthesis through the cleavage of single-stranded RNA. The toxicity is reversed by the antitoxin EndoAI. Toxin activity cannot be inhibited by MazE from E.coli. The EndoA-EndoAI complex does not seem to bind its own promoter. This is Endoribonuclease EndoA from Bacillus subtilis (strain 168).